The sequence spans 251 residues: Small ribosomal subunit protein uS2 (251 aa).

The protein belongs to the universal ribosomal protein uS2 family.

The protein is Small ribosomal subunit protein uS2 of Synechococcus sp. (strain ATCC 27144 / PCC 6301 / SAUG 1402/1) (Anacystis nidulans).